Consider the following 425-residue polypeptide: 3-phosphoshikimate 1-carboxyvinyltransferase (425 aa).

3-phosphoshikimate-binding residues include Lys22, Ser23, and Arg27. Lys22 is a phosphoenolpyruvate binding site. Positions 95 and 123 each coordinate phosphoenolpyruvate. Residues Ser169, Ser170, Gln171, Ser197, Asp313, Asn336, and Lys340 each coordinate 3-phosphoshikimate. Residue Gln171 participates in phosphoenolpyruvate binding. Residue Asp313 is the Proton acceptor of the active site. Residues Arg344, Arg386, and Lys411 each coordinate phosphoenolpyruvate.

This sequence belongs to the EPSP synthase family. As to quaternary structure, monomer.

Its subcellular location is the cytoplasm. It catalyses the reaction 3-phosphoshikimate + phosphoenolpyruvate = 5-O-(1-carboxyvinyl)-3-phosphoshikimate + phosphate. It functions in the pathway metabolic intermediate biosynthesis; chorismate biosynthesis; chorismate from D-erythrose 4-phosphate and phosphoenolpyruvate: step 6/7. Catalyzes the transfer of the enolpyruvyl moiety of phosphoenolpyruvate (PEP) to the 5-hydroxyl of shikimate-3-phosphate (S3P) to produce enolpyruvyl shikimate-3-phosphate and inorganic phosphate. In Pseudoalteromonas translucida (strain TAC 125), this protein is 3-phosphoshikimate 1-carboxyvinyltransferase.